We begin with the raw amino-acid sequence, 402 residues long: Pentalenic acid synthase (402 aa).

Residues 1–28 (MTEPGTSVSAPVAFPQDRTCPYDPPTAY) form a disordered region. Residue cysteine 351 coordinates heme.

The protein belongs to the cytochrome P450 family. The cofactor is heme.

The catalysed reaction is 1-deoxypentalenate + reduced 2[4Fe-4S]-[ferredoxin] + O2 + 2 H(+) = pentalenate + oxidized 2[4Fe-4S]-[ferredoxin] + H2O. The protein operates within antibiotic biosynthesis; neopentalenolactone biosynthesis. Functionally, catalyzes the conversion of 1-deoxypentalenic acid to pentalenic acid in the biosynthesis of neopentalenolactone antibiotic. In Streptomyces avermitilis (strain ATCC 31267 / DSM 46492 / JCM 5070 / NBRC 14893 / NCIMB 12804 / NRRL 8165 / MA-4680), this protein is Pentalenic acid synthase (cyp28).